The sequence spans 267 residues: Expansin-B10 (267 aa).

The N-terminal stretch at 1-22 (MASSCLLLACVVAAAMVSAVSC) is a signal peptide. Asn-32 carries N-linked (GlcNAc...) asparagine glycosylation. The 107-residue stretch at 61 to 167 (GGACGYKDID…RRVRCKYPGE (107 aa)) folds into the Expansin-like EG45 domain. 3 disulfides stabilise this stretch: Cys-64-Cys-92, Cys-95-Cys-162, and Cys-100-Cys-106. Positions 181–262 (NYFAVLVKYV…NWKANALYKS (82 aa)) constitute an Expansin-like CBD domain. A glycan (N-linked (GlcNAc...) asparagine) is linked at Asn-213.

This sequence belongs to the expansin family. Expansin B subfamily.

The protein localises to the secreted. The protein resides in the cell wall. It localises to the membrane. May cause loosening and extension of plant cell walls by disrupting non-covalent bonding between cellulose microfibrils and matrix glucans. No enzymatic activity has been found. May be required for rapid internodal elongation in deepwater rice during submergence. This chain is Expansin-B10 (EXPB10), found in Oryza sativa subsp. japonica (Rice).